Consider the following 490-residue polypeptide: GTPase Der (490 aa).

2 consecutive EngA-type G domains span residues 3–166 (PVVA…VDEI) and 203–376 (IKLA…DSST). GTP-binding positions include 9–16 (GRPNVGKS), 56–60 (DTGGI), 118–121 (NKTD), 209–216 (GRPNVGKS), 256–260 (DTAGV), and 321–324 (NKWD). Residues 377–461 (RRQSTAMLTR…PIRIQFKEGE (85 aa)) enclose the KH-like domain.

This sequence belongs to the TRAFAC class TrmE-Era-EngA-EngB-Septin-like GTPase superfamily. EngA (Der) GTPase family. In terms of assembly, associates with the 50S ribosomal subunit.

Functionally, GTPase that plays an essential role in the late steps of ribosome biogenesis. The protein is GTPase Der of Enterobacter sp. (strain 638).